The following is a 280-amino-acid chain: Beta carbonic anhydrase 4 (280 aa).

At Ala-2 the chain carries N-acetylalanine. Residues 47–76 (NVAAAKIKALTAELKELDSSNSDAIERIKT) are a coiled coil. Residue Thr-57 is modified to Phosphothreonine. Ser-117 carries the phosphoserine modification. S-nitrosocysteine is present on Cys-223.

The protein belongs to the beta-class carbonic anhydrase family. In terms of assembly, interacts with DTX56. In terms of tissue distribution, strongly expressed in aerial tissues including leaves, stems, flowers and siliques. Accumulates in both guard cells and mesophyll cells.

The protein localises to the cell membrane. The catalysed reaction is hydrogencarbonate + H(+) = CO2 + H2O. Reversible hydration of carbon dioxide. Together with BCA1, involved in the CO(2) signaling pathway which controls gas-exchange between plants and the atmosphere by modulating stomatal development and movements. Promotes water use efficiency. The protein is Beta carbonic anhydrase 4 of Arabidopsis thaliana (Mouse-ear cress).